The sequence spans 343 residues: Aldehyde reductase 2 (343 aa).

Tyr-177 lines the NADP(+) pocket.

It belongs to the NAD(P)-dependent epimerase/dehydratase family. Dihydroflavonol-4-reductase subfamily. In terms of assembly, monomer.

It carries out the reaction a primary alcohol + NADP(+) = an aldehyde + NADPH + H(+). Its activity is regulated as follows. Inhibited by quercetin and diphenylhydantoin. Functionally, catalyzes the asymmetric reduction of o-substituted aliphatic and aromatic aldehydes and ketones to an S-enantiomer. Reduces ethyl 4-chloro-3-oxobutanoate to ethyl (S)-4-chloro-3-hydroxybutanoate. In Sporidiobolus salmonicolor (Yeast-like fungus), this protein is Aldehyde reductase 2.